A 205-amino-acid polypeptide reads, in one-letter code: Thymidine kinase (205 aa).

ATP contacts are provided by residues 9 to 16 (SAMNAGKS) and 87 to 90 (DESQ). The active-site Proton acceptor is E88. Zn(2+) is bound by residues C145, C147, C182, and H185.

Belongs to the thymidine kinase family. As to quaternary structure, homotetramer.

Its subcellular location is the cytoplasm. It carries out the reaction thymidine + ATP = dTMP + ADP + H(+). The sequence is that of Thymidine kinase from Salmonella paratyphi A (strain ATCC 9150 / SARB42).